The chain runs to 452 residues: Enolase (452 aa).

A (2R)-2-phosphoglycerate-binding site is contributed by Gln167. The active-site Proton donor is the Glu209. 3 residues coordinate Mg(2+): Asp250, Glu307, and Asp334. Positions 359, 388, 389, and 410 each coordinate (2R)-2-phosphoglycerate. The active-site Proton acceptor is the Lys359.

This sequence belongs to the enolase family. Mg(2+) is required as a cofactor.

The protein localises to the cytoplasm. It is found in the secreted. It localises to the cell surface. It catalyses the reaction (2R)-2-phosphoglycerate = phosphoenolpyruvate + H2O. It participates in carbohydrate degradation; glycolysis; pyruvate from D-glyceraldehyde 3-phosphate: step 4/5. Functionally, catalyzes the reversible conversion of 2-phosphoglycerate (2-PG) into phosphoenolpyruvate (PEP). It is essential for the degradation of carbohydrates via glycolysis. This is Enolase from Mesomycoplasma hyopneumoniae (strain 7448) (Mycoplasma hyopneumoniae).